The primary structure comprises 344 residues: Anthranilate phosphoribosyltransferase (344 aa).

Residues G80, 83–84 (GD), T88, 90–93 (NIST), 108–116 (KHGNRSISS), and S120 contribute to the 5-phospho-alpha-D-ribose 1-diphosphate site. Position 80 (G80) interacts with anthranilate. S92 is a Mg(2+) binding site. N111 serves as a coordination point for anthranilate. R166 serves as a coordination point for anthranilate. Mg(2+) is bound by residues D229 and E230.

The protein belongs to the anthranilate phosphoribosyltransferase family. As to quaternary structure, homodimer. Mg(2+) serves as cofactor.

The enzyme catalyses N-(5-phospho-beta-D-ribosyl)anthranilate + diphosphate = 5-phospho-alpha-D-ribose 1-diphosphate + anthranilate. It functions in the pathway amino-acid biosynthesis; L-tryptophan biosynthesis; L-tryptophan from chorismate: step 2/5. Its function is as follows. Catalyzes the transfer of the phosphoribosyl group of 5-phosphorylribose-1-pyrophosphate (PRPP) to anthranilate to yield N-(5'-phosphoribosyl)-anthranilate (PRA). This is Anthranilate phosphoribosyltransferase from Chloroherpeton thalassium (strain ATCC 35110 / GB-78).